The sequence spans 559 residues: Peptidyl-prolyl isomerase cwc27 (559 aa).

Positions 11–184 constitute a PPIase cyclophilin-type domain; sequence PTASATLHTT…YPVKVVSCEV (174 aa). Disordered regions lie at residues 201–395, 413–449, and 518–559; these read ATAP…GFSS, ESADAKSGPHGKTSISASDTTKYTSQAKSNTEPEDEE, and PRER…REKP. Positions 261–273 are enriched in basic and acidic residues; it reads APKKTSPEAEQQT. The segment covering 305-319 has biased composition (pro residues); the sequence is LPDPESPARSPPQSP. Composition is skewed to polar residues over residues 384–394 and 425–442; these read GSSTNGVTGFS and TSISASDTTKYTSQAKSN.

The protein belongs to the cyclophilin-type PPIase family. CWC27 subfamily. Associated with the spliceosome.

Its subcellular location is the cytoplasm. The protein resides in the nucleus. The enzyme catalyses [protein]-peptidylproline (omega=180) = [protein]-peptidylproline (omega=0). In terms of biological role, PPIases accelerate the folding of proteins. It catalyzes the cis-trans isomerization of proline imidic peptide bonds in oligopeptides. Involved in pre-mRNA splicing. The chain is Peptidyl-prolyl isomerase cwc27 (cwc27) from Aspergillus fumigatus (strain ATCC MYA-4609 / CBS 101355 / FGSC A1100 / Af293) (Neosartorya fumigata).